A 354-amino-acid chain; its full sequence is Protein RecA (354 aa).

75-82 (GPESSGKT) serves as a coordination point for ATP.

It belongs to the RecA family.

The protein localises to the cytoplasm. Its function is as follows. Can catalyze the hydrolysis of ATP in the presence of single-stranded DNA, the ATP-dependent uptake of single-stranded DNA by duplex DNA, and the ATP-dependent hybridization of homologous single-stranded DNAs. It interacts with LexA causing its activation and leading to its autocatalytic cleavage. This is Protein RecA from Cupriavidus taiwanensis (strain DSM 17343 / BCRC 17206 / CCUG 44338 / CIP 107171 / LMG 19424 / R1) (Ralstonia taiwanensis (strain LMG 19424)).